We begin with the raw amino-acid sequence, 410 residues long: F-box protein At3g19890 (410 aa).

One can recognise an F-box domain in the interval 2–49 (TMISDLSKDLVEEILSKAPITSLGAVRSTHKQWNALSKGRLLYKAEAK). A disordered region spans residues 386–410 (EDKCKSIKMVDTKRQRKKRKRKSKR). Residues 387–398 (DKCKSIKMVDTK) show a composition bias toward basic and acidic residues. Residues 399–410 (RQRKKRKRKSKR) are compositionally biased toward basic residues.

In Arabidopsis thaliana (Mouse-ear cress), this protein is F-box protein At3g19890.